Consider the following 898-residue polypeptide: Aconitate hydratase 1 (898 aa).

Residue Ala-2 is modified to N-acetylalanine. Substrate is bound by residues Gln-90 and 209 to 211 (DSH). The [4Fe-4S] cluster site is built by Cys-441, Cys-507, and Cys-510. Residues Arg-540, Arg-545, Arg-703, and 784 to 785 (SR) contribute to the substrate site.

It belongs to the aconitase/IPM isomerase family. In terms of assembly, monomer. Requires [4Fe-4S] cluster as cofactor. Mostly expressed in roots, stems and leaves, also present in stems and flowers.

The protein localises to the cytoplasm. Its subcellular location is the mitochondrion. It carries out the reaction citrate = D-threo-isocitrate. The protein operates within carbohydrate metabolism; tricarboxylic acid cycle; isocitrate from oxaloacetate: step 2/2. Its function is as follows. Catalyzes the isomerization of citrate to isocitrate via cis-aconitate. Contributes to oxidative stress tolerance. May have a role in respiration. This chain is Aconitate hydratase 1, found in Arabidopsis thaliana (Mouse-ear cress).